A 400-amino-acid chain; its full sequence is Serine/threonine transporter SstT (400 aa).

8 helical membrane passes run 14 to 34 (IIIA…VTPY), 48 to 68 (SVAP…FQVG), 76 to 96 (VLLL…IASL), 136 to 156 (AISE…GLAM), 177 to 197 (IIHK…AVTF), 211 to 231 (LLAV…PILV), 293 to 313 (LAGA…TLGI), and 334 to 354 (ASGV…LFGI).

It belongs to the dicarboxylate/amino acid:cation symporter (DAACS) (TC 2.A.23) family.

The protein resides in the cell inner membrane. The enzyme catalyses L-serine(in) + Na(+)(in) = L-serine(out) + Na(+)(out). It catalyses the reaction L-threonine(in) + Na(+)(in) = L-threonine(out) + Na(+)(out). Its function is as follows. Involved in the import of serine and threonine into the cell, with the concomitant import of sodium (symport system). This is Serine/threonine transporter SstT from Acinetobacter baumannii (strain SDF).